The primary structure comprises 274 residues: uncharacterized protein (274 aa).

An N-terminal signal peptide occupies residues 1 to 19; that stretch reads MKRINKVLLSLLCLVIAYA.

This is an uncharacterized protein from Rickettsia prowazekii (strain Madrid E).